Reading from the N-terminus, the 121-residue chain is uncharacterized protein (121 aa).

A signal peptide spans 1 to 19 (MKKFALATIFALATTSAFA).

The protein to E.coli YgiW.

Its subcellular location is the periplasm. This is an uncharacterized protein from Haemophilus influenzae (strain ATCC 51907 / DSM 11121 / KW20 / Rd).